We begin with the raw amino-acid sequence, 235 residues long: Protein FEV (235 aa).

The segment at residues 58 to 138 (IQLWQFLLEL…HGKRYAYKFD (81 aa)) is a DNA-binding region (ETS).

This sequence belongs to the ETS family. As to expression, expressed by serotonergic neurons in anterior and posterior raphe.

It is found in the nucleus. Functionally, functions as a transcriptional regulator. Functions in the differentiation and the maintenance of the central serotonergic neurons. May play a role in cell growth. In Danio rerio (Zebrafish), this protein is Protein FEV (fev).